A 376-amino-acid polypeptide reads, in one-letter code: N-acetyldiaminopimelate deacetylase (376 aa).

Residue Asp69 is part of the active site. Residue Glu128 is the Proton acceptor of the active site.

The protein belongs to the peptidase M20A family. N-acetyldiaminopimelate deacetylase subfamily.

The catalysed reaction is N-acetyl-(2S,6S)-2,6-diaminopimelate + H2O = (2S,6S)-2,6-diaminopimelate + acetate. It participates in amino-acid biosynthesis; L-lysine biosynthesis via DAP pathway; LL-2,6-diaminopimelate from (S)-tetrahydrodipicolinate (acetylase route): step 3/3. Catalyzes the conversion of N-acetyl-diaminopimelate to diaminopimelate and acetate. The polypeptide is N-acetyldiaminopimelate deacetylase (Bacillus cereus (strain AH820)).